The sequence spans 264 residues: Thymidylate synthase (264 aa).

Arg21 serves as a coordination point for dUMP. His51 contributes to the (6R)-5,10-methylene-5,6,7,8-tetrahydrofolate binding site. 126-127 (RR) is a dUMP binding site. The Nucleophile role is filled by Cys146. DUMP-binding positions include 166–169 (RSAD), Asn177, and 207–209 (HLY). Residue Asp169 participates in (6R)-5,10-methylene-5,6,7,8-tetrahydrofolate binding. Ala263 contributes to the (6R)-5,10-methylene-5,6,7,8-tetrahydrofolate binding site.

The protein belongs to the thymidylate synthase family. Bacterial-type ThyA subfamily. In terms of assembly, homodimer.

The protein localises to the cytoplasm. The catalysed reaction is dUMP + (6R)-5,10-methylene-5,6,7,8-tetrahydrofolate = 7,8-dihydrofolate + dTMP. Its pathway is pyrimidine metabolism; dTTP biosynthesis. Catalyzes the reductive methylation of 2'-deoxyuridine-5'-monophosphate (dUMP) to 2'-deoxythymidine-5'-monophosphate (dTMP) while utilizing 5,10-methylenetetrahydrofolate (mTHF) as the methyl donor and reductant in the reaction, yielding dihydrofolate (DHF) as a by-product. This enzymatic reaction provides an intracellular de novo source of dTMP, an essential precursor for DNA biosynthesis. This Bartonella bacilliformis (strain ATCC 35685 / KC583 / Herrer 020/F12,63) protein is Thymidylate synthase.